The chain runs to 94 residues: Aspartyl/glutamyl-tRNA(Asn/Gln) amidotransferase subunit C (94 aa).

Belongs to the GatC family. Heterotrimer of A, B and C subunits.

It catalyses the reaction L-glutamyl-tRNA(Gln) + L-glutamine + ATP + H2O = L-glutaminyl-tRNA(Gln) + L-glutamate + ADP + phosphate + H(+). The catalysed reaction is L-aspartyl-tRNA(Asn) + L-glutamine + ATP + H2O = L-asparaginyl-tRNA(Asn) + L-glutamate + ADP + phosphate + 2 H(+). Functionally, allows the formation of correctly charged Asn-tRNA(Asn) or Gln-tRNA(Gln) through the transamidation of misacylated Asp-tRNA(Asn) or Glu-tRNA(Gln) in organisms which lack either or both of asparaginyl-tRNA or glutaminyl-tRNA synthetases. The reaction takes place in the presence of glutamine and ATP through an activated phospho-Asp-tRNA(Asn) or phospho-Glu-tRNA(Gln). The sequence is that of Aspartyl/glutamyl-tRNA(Asn/Gln) amidotransferase subunit C from Desulfatibacillum aliphaticivorans.